A 457-amino-acid chain; its full sequence is Secreted effector kinase SteC (457 aa).

Lys256 is an ATP binding site.

Belongs to the protein kinase superfamily. Autophosphorylated.

The protein localises to the secreted. The protein resides in the host cytoplasm. Functionally, effector proteins function to alter host cell physiology and promote bacterial survival in host tissues. This protein is a kinase, which is required for SPI-2 T3SS-dependent F-actin meshwork formation in infected host cells. The polypeptide is Secreted effector kinase SteC (steC) (Salmonella typhimurium (strain LT2 / SGSC1412 / ATCC 700720)).